The sequence spans 359 residues: 3-dehydroquinate synthase (359 aa).

NAD(+)-binding positions include 72–77 (EGEIHK), 106–110 (GVIGD), 130–131 (TS), Lys143, Lys152, and 170–173 (CLKT). Zn(2+)-binding residues include Glu185, His248, and His264.

The protein belongs to the sugar phosphate cyclases superfamily. Dehydroquinate synthase family. The cofactor is Co(2+). Zn(2+) is required as a cofactor. Requires NAD(+) as cofactor.

The protein resides in the cytoplasm. It catalyses the reaction 7-phospho-2-dehydro-3-deoxy-D-arabino-heptonate = 3-dehydroquinate + phosphate. The protein operates within metabolic intermediate biosynthesis; chorismate biosynthesis; chorismate from D-erythrose 4-phosphate and phosphoenolpyruvate: step 2/7. Catalyzes the conversion of 3-deoxy-D-arabino-heptulosonate 7-phosphate (DAHP) to dehydroquinate (DHQ). In Dehalococcoides mccartyi (strain CBDB1), this protein is 3-dehydroquinate synthase.